The sequence spans 192 residues: Fe/S biogenesis protein NfuA (192 aa).

C149 and C152 together coordinate [4Fe-4S] cluster.

It belongs to the NfuA family. As to quaternary structure, homodimer. [4Fe-4S] cluster serves as cofactor.

In terms of biological role, involved in iron-sulfur cluster biogenesis. Binds a 4Fe-4S cluster, can transfer this cluster to apoproteins, and thereby intervenes in the maturation of Fe/S proteins. Could also act as a scaffold/chaperone for damaged Fe/S proteins. The sequence is that of Fe/S biogenesis protein NfuA from Idiomarina loihiensis (strain ATCC BAA-735 / DSM 15497 / L2-TR).